The chain runs to 228 residues: Urease accessory protein UreF (228 aa).

This sequence belongs to the UreF family. In terms of assembly, ureD, UreF and UreG form a complex that acts as a GTP-hydrolysis-dependent molecular chaperone, activating the urease apoprotein by helping to assemble the nickel containing metallocenter of UreC. The UreE protein probably delivers the nickel.

The protein localises to the cytoplasm. Its function is as follows. Required for maturation of urease via the functional incorporation of the urease nickel metallocenter. This chain is Urease accessory protein UreF, found in Brucella ovis (strain ATCC 25840 / 63/290 / NCTC 10512).